A 719-amino-acid chain; its full sequence is Putative ankyrin repeat protein RBE_0319 (719 aa).

ANK repeat units lie at residues 377-406, 408-438, 442-472, 476-506, 510-540, 544-572, 576-605, 609-639, and 642-672; these read VAEE…EISS, TLIK…NINE, NGGT…EVNK, YGFT…EINQ, YQTT…KFNE, LGYT…DINQ, DGYT…NVNE, HGLT…EVSE, and QYGT…NLNK.

The sequence is that of Putative ankyrin repeat protein RBE_0319 from Rickettsia bellii (strain RML369-C).